A 1528-amino-acid polypeptide reads, in one-letter code: Mitogen-activated protein kinase kinae kinase MCK1 (1528 aa).

The segment covering 1–11 has biased composition (low complexity); sequence MYPGSSQSRPY. Disordered stretches follow at residues 1–84, 109–208, 303–418, 449–481, 607–652, 695–731, 746–786, 811–929, 943–1012, and 1086–1191; these read MYPG…PAPR, ATAP…VPGI, VHAR…NNVR, INGRGARQSPSDLGDNSAGTDSPVSARDTKLPF, VKPP…EARL, GKPVDFDTPRHSPYEDKNTDRMFPTRNAPAPPVAPSA, VQGS…SQPM, SANN…SDDG, KKAK…EDGK, and ATPL…ALLR. Residues 12-21 are compositionally biased toward pro residues; it reads QVPPPPPMSP. The span at 22–31 shows a compositional bias: low complexity; that stretch reads PLSQMHQQMS. Over residues 53-64 the composition is skewed to pro residues; it reads APPPPPPGPPPA. The segment covering 157-173 has biased composition (low complexity); that stretch reads SSQTWQTTSSSSTNTAS. Polar residues-rich tracts occupy residues 174–183, 191–205, and 318–327; these read VNDNVQSNAP, NNSASITGTQSSSNV, and HGRQGSINSR. Positions 328-337 are enriched in basic and acidic residues; the sequence is GNDKGTHDGS. Polar residues predominate over residues 338 to 363; it reads DSPNTPSSQSRSTTIPTFPDGSSFSN. Residues 396 to 408 are compositionally biased toward low complexity; the sequence is SSTPKSSTLSVSP. A compositionally biased stretch (polar residues) spans 409–418; sequence HSSRFGNNVR. Composition is skewed to polar residues over residues 613–622 and 630–641; these read SQQSTWSAGD and GTSSSMSRQQNT. Composition is skewed to basic and acidic residues over residues 642–652 and 698–714; these read LKDDQSEEARL and VDFDTPRHSPYEDKNTD. A compositionally biased stretch (polar residues) spans 846 to 860; sequence RSQTAGDLSPISQMP. Acidic residues predominate over residues 917–928; that stretch reads QSDDDSGDDSDD. A compositionally biased stretch (polar residues) spans 977–986; sequence VSFNSPQSAR. Basic and acidic residues predominate over residues 1001–1012; that stretch reads PKSDMWDSEDGK. Over residues 1086 to 1111 the composition is skewed to polar residues; it reads ATPLNSLPPSRVQSMYNESDTLGSDE. Residues 1142–1152 show a composition bias toward basic and acidic residues; that stretch reads SIREKARGAHE. A compositionally biased stretch (polar residues) spans 1158 to 1188; sequence TQTSMAAPQGLSRSGGTPATETQPTQNNSSA. Positions 1238 to 1507 constitute a Protein kinase domain; that stretch reads WFKGQLIGKG…NKLLSQHPFC (270 aa). Residues 1244–1252 and Lys-1267 contribute to the ATP site; that span reads IGKGTYGRV.

The protein belongs to the protein kinase superfamily. STE Ser/Thr protein kinase family. MAP kinase kinase kinase subfamily. As to quaternary structure, interacts with the adapter protein MST50 and MIP11.

It catalyses the reaction L-seryl-[protein] + ATP = O-phospho-L-seryl-[protein] + ADP + H(+). It carries out the reaction L-threonyl-[protein] + ATP = O-phospho-L-threonyl-[protein] + ADP + H(+). Mitogen-activated protein kinase kinase kinase; part of the MCK1-MKK2-MPS1 MAP kinase (MAPK) signal transduction cascade that is essential for appressorium formation, penetration and invasive growth. Beside its role in pathogenesis, the MPS1 cascade is active in conidiation and cellular stress responses. Targets downstream of the the MPS1-MAPK pathway include transcription factors MIG1 and SWI6, as well as GSK1 and MPG1. The chain is Mitogen-activated protein kinase kinae kinase MCK1 from Pyricularia oryzae (strain 70-15 / ATCC MYA-4617 / FGSC 8958) (Rice blast fungus).